A 216-amino-acid polypeptide reads, in one-letter code: Probable GTP-binding protein EngB (216 aa).

In terms of domain architecture, EngB-type G spans 37–214 (DGLEVAFAGR…RAAMIRLLDE (178 aa)). Residues 45 to 52 (GRSNVGKS), 72 to 76 (GRTQE), 92 to 95 (DMPG), 159 to 162 (TKAD), and 193 to 195 (TSS) each bind GTP. Mg(2+) contacts are provided by S52 and T74.

The protein belongs to the TRAFAC class TrmE-Era-EngA-EngB-Septin-like GTPase superfamily. EngB GTPase family. Requires Mg(2+) as cofactor.

In terms of biological role, necessary for normal cell division and for the maintenance of normal septation. This chain is Probable GTP-binding protein EngB, found in Rhodopseudomonas palustris (strain HaA2).